Here is a 155-residue protein sequence, read N- to C-terminus: Ribosomal RNA large subunit methyltransferase H (155 aa).

S-adenosyl-L-methionine is bound by residues L73, G104, and L123–L128.

The protein belongs to the RNA methyltransferase RlmH family. Homodimer.

It localises to the cytoplasm. It carries out the reaction pseudouridine(1915) in 23S rRNA + S-adenosyl-L-methionine = N(3)-methylpseudouridine(1915) in 23S rRNA + S-adenosyl-L-homocysteine + H(+). Its function is as follows. Specifically methylates the pseudouridine at position 1915 (m3Psi1915) in 23S rRNA. This is Ribosomal RNA large subunit methyltransferase H from Coxiella burnetii (strain Dugway 5J108-111).